The following is a 393-amino-acid chain: 2,3,4,5-tetrahydropyridine-2,6-dicarboxylate N-succinyltransferase (393 aa).

The Acyl-anhydride intermediate role is filled by Glu261. Succinyl-CoA-binding positions include Arg263, Gly278, Ser281, Ala304, Asp319–Ala320, Gly327, Lys356, and Arg369–Ser372.

This sequence belongs to the type 2 tetrahydrodipicolinate N-succinyltransferase family. In terms of assembly, homotrimer.

The protein resides in the cytoplasm. It carries out the reaction (S)-2,3,4,5-tetrahydrodipicolinate + succinyl-CoA + H2O = (S)-2-succinylamino-6-oxoheptanedioate + CoA. It participates in amino-acid biosynthesis; L-lysine biosynthesis via DAP pathway; LL-2,6-diaminopimelate from (S)-tetrahydrodipicolinate (succinylase route): step 1/3. Functionally, catalyzes the conversion of the cyclic tetrahydrodipicolinate (THDP) into the acyclic N-succinyl-L-2-amino-6-oxopimelate using succinyl-CoA. This is 2,3,4,5-tetrahydropyridine-2,6-dicarboxylate N-succinyltransferase from Nitratiruptor sp. (strain SB155-2).